The sequence spans 342 residues: Tryptophan--tRNA ligase (342 aa).

ATP contacts are provided by residues Gln19–Ser21 and Gly27–Asn28. A 'HIGH' region motif is present at residues Pro20–Asn28. Asp143 provides a ligand contact to L-tryptophan. Residues Gly155–Asp157, Val194, and Lys203–Ser207 contribute to the ATP site. Positions Lys203–Ser207 match the 'KMSKS' region motif.

This sequence belongs to the class-I aminoacyl-tRNA synthetase family. In terms of assembly, homodimer.

It is found in the cytoplasm. The enzyme catalyses tRNA(Trp) + L-tryptophan + ATP = L-tryptophyl-tRNA(Trp) + AMP + diphosphate + H(+). Catalyzes the attachment of tryptophan to tRNA(Trp). This is Tryptophan--tRNA ligase from Yersinia pestis.